The chain runs to 528 residues: GMP synthase [glutamine-hydrolyzing] (528 aa).

Positions 13 to 204 (AIVILDFGSQ…VNHICGCEQD (192 aa)) constitute a Glutamine amidotransferase type-1 domain. Cys90 acts as the Nucleophile in catalysis. Active-site residues include His178 and Glu180. One can recognise a GMPS ATP-PPase domain in the interval 205–403 (WTTNAFIDEA…LGLPEEIVRR (199 aa)). Residue 232–238 (SGGVDSS) coordinates ATP.

In terms of assembly, homodimer.

The enzyme catalyses XMP + L-glutamine + ATP + H2O = GMP + L-glutamate + AMP + diphosphate + 2 H(+). The protein operates within purine metabolism; GMP biosynthesis; GMP from XMP (L-Gln route): step 1/1. Catalyzes the synthesis of GMP from XMP. The protein is GMP synthase [glutamine-hydrolyzing] of Synechococcus sp. (strain CC9902).